The following is a 214-amino-acid chain: ER lumen protein-retaining receptor 3 (214 aa).

Topologically, residues 1-4 are lumenal; the sequence is MNIF. A helical transmembrane segment spans residues 5-24; that stretch reads RILGDVSHLLAIIILLLKMW. Residues 25–32 are Cytoplasmic-facing; sequence KSKSCAGI. The helical transmembrane segment at 33-52 threads the bilayer; that stretch reads SGKSQLLFALVFTTRYLDLF. An interaction with the K-D-E-L motif on target proteins region spans residues 47–48; sequence RY. The Lumenal segment spans residues 53 to 58; the sequence is TVFISP. The chain crosses the membrane as a helical span at residues 59-79; sequence YNTVMKIIFLACAYVTVYLIY. At 80–92 the chain is on the cytoplasmic side; it reads GKLRKSYDSENDT. The chain crosses the membrane as a helical span at residues 93–110; sequence FRLEFLLVPVIGLSFLEN. The Lumenal segment spans residues 111-116; it reads YEFTPL. A helical membrane pass occupies residues 117-135; that stretch reads EILWTFSIYLESVAILPQL. Residues 136-149 are Cytoplasmic-facing; the sequence is FMISKTGEAESITT. A helical membrane pass occupies residues 150 to 168; the sequence is HYLFFLGLYRVLYLANWIW. The interval 159–169 is interaction with the K-D-E-L motif on target proteins; the sequence is RVLYLANWIWR. The Lumenal segment spans residues 169–178; it reads RYHTEKFYDQ. Residues 179–199 form a helical membrane-spanning segment; the sequence is IAVVSGVVQTIFYFDFFYLYV. Residues 200 to 214 lie on the Cytoplasmic side of the membrane; it reads TKVLKGKKLSLPMPV. Positions 204–207 are important for recycling of cargo proteins with the sequence motif K-D-E-L from the Golgi to the endoplasmic reticulum; sequence KGKK.

The protein belongs to the ERD2 family.

The protein localises to the endoplasmic reticulum membrane. The protein resides in the golgi apparatus membrane. It localises to the cytoplasmic vesicle. Its subcellular location is the COPI-coated vesicle membrane. Its function is as follows. Receptor for the C-terminal sequence motif K-D-E-L that is present on endoplasmic reticulum resident proteins and that mediates their recycling from the Golgi back to the endoplasmic reticulum. This chain is ER lumen protein-retaining receptor 3 (kdelr3), found in Xenopus laevis (African clawed frog).